Consider the following 261-residue polypeptide: Small ribosomal subunit protein eS4B (261 aa).

The residue at position 32 (S32) is a Phosphoserine. The 64-residue stretch at 42-105 (LPLIVFLRNR…NENFRLVYDV (64 aa)) folds into the S4 RNA-binding domain. K62 is covalently cross-linked (Glycyl lysine isopeptide (Lys-Gly) (interchain with G-Cter in ubiquitin)). Position 115 is a phosphothreonine (T115). Glycyl lysine isopeptide (Lys-Gly) (interchain with G-Cter in ubiquitin) cross-links involve residues K134, K161, K168, K174, K179, K211, and K233. At S247 the chain carries Phosphoserine.

Belongs to the eukaryotic ribosomal protein eS4 family. As to quaternary structure, component of the small ribosomal subunit (SSU). Mature yeast ribosomes consist of a small (40S) and a large (60S) subunit. The 40S small subunit contains 1 molecule of ribosomal RNA (18S rRNA) and 33 different proteins (encoded by 57 genes). The large 60S subunit contains 3 rRNA molecules (25S, 5.8S and 5S rRNA) and 46 different proteins (encoded by 81 genes).

It is found in the cytoplasm. Component of the ribosome, a large ribonucleoprotein complex responsible for the synthesis of proteins in the cell. The small ribosomal subunit (SSU) binds messenger RNAs (mRNAs) and translates the encoded message by selecting cognate aminoacyl-transfer RNA (tRNA) molecules. The large subunit (LSU) contains the ribosomal catalytic site termed the peptidyl transferase center (PTC), which catalyzes the formation of peptide bonds, thereby polymerizing the amino acids delivered by tRNAs into a polypeptide chain. The nascent polypeptides leave the ribosome through a tunnel in the LSU and interact with protein factors that function in enzymatic processing, targeting, and the membrane insertion of nascent chains at the exit of the ribosomal tunnel. This Saccharomyces cerevisiae (strain ATCC 204508 / S288c) (Baker's yeast) protein is Small ribosomal subunit protein eS4B.